The following is a 4544-amino-acid chain: Prolow-density lipoprotein receptor-related protein 1 (4544 aa).

A signal peptide spans Met1–Ala19. Residues Ala20–Gly4419 are Extracellular-facing. LDL-receptor class A domains follow at residues Lys25–Gln66 and Gln70–Glu110. 6 cysteine pairs are disulfide-bonded: Cys27–Cys40, Cys34–Cys53, Cys47–Cys64, Cys72–Cys85, Cys79–Cys98, and Cys92–Cys108. One can recognise an EGF-like 1 domain in the interval Leu111–Lys149. N-linked (GlcNAc...) asparagine glycosylation is present at Asn114. Disulfide bonds link Cys115-Cys124, Cys120-Cys133, Cys135-Cys148, Cys154-Cys164, Cys160-Cys173, and Cys175-Cys188. Asn136 is a glycosylation site (N-linked (GlcNAc...) asparagine). The EGF-like 2; calcium-binding domain occupies Asp150–Lys189. Residues Asn185, Asn239, and Asn274 are each glycosylated (N-linked (GlcNAc...) asparagine). 3 LDL-receptor class B repeats span residues Gly292 to Met334, Gly335 to Ser378, and Arg379 to Tyr422. The N-linked (GlcNAc...) asparagine glycan is linked to Asn357. Asn446 is a glycosylation site (N-linked (GlcNAc...) asparagine). The region spanning Arg474–Lys520 is the EGF-like 3 domain. Intrachain disulfides connect Cys478–Cys493, Cys489–Cys504, and Cys506–Cys519. LDL-receptor class B repeat units lie at residues Gly571 to Gly613, Asp614 to Asn659, Gly660 to Ala710, and Gly711 to Tyr754. N-linked (GlcNAc...) (complex) asparagine glycosylation is present at Asn729. One can recognise an EGF-like 4 domain in the interval Gly803–Leu843. Intrachain disulfides connect Cys807/Cys818, Cys814/Cys827, Cys829/Cys842, Cys854/Cys866, Cys861/Cys879, Cys873/Cys890, Cys895/Cys907, Cys902/Cys920, Cys914/Cys931, Cys936/Cys948, Cys943/Cys961, Cys955/Cys971, Cys976/Cys989, Cys984/Cys1002, Cys996/Cys1011, Cys1015/Cys1027, Cys1022/Cys1040, Cys1034/Cys1051, Cys1062/Cys1075, Cys1069/Cys1088, Cys1082/Cys1097, Cys1104/Cys1118, Cys1112/Cys1131, Cys1125/Cys1140, Cys1145/Cys1159, Cys1152/Cys1172, Cys1166/Cys1182, Cys1185/Cys1196, Cys1192/Cys1206, Cys1208/Cys1221, Cys1227/Cys1237, Cys1233/Cys1246, and Cys1248/Cys1261. LDL-receptor class A domains are found at residues Pro852–Gln892, His893–Ala933, Arg934–Tyr973, Pro974–His1013, His1013–Asn1053, Gly1060–Gly1099, His1102–Ser1142, and Leu1143–Cys1182. Ca(2+) contacts are provided by Trp871, Asp874, Asp876, Asp878, Asp884, and Glu885. Asn928 carries an N-linked (GlcNAc...) asparagine glycan. 6 residues coordinate Ca(2+): Trp1032, Asp1035, Asp1037, Asp1039, Asp1045, and Glu1046. Asn1050 carries N-linked (GlcNAc...) asparagine glycosylation. The Ca(2+) site is built by Trp1080, Asp1083, Asp1085, Asp1087, Asp1093, and Glu1094. N-linked (GlcNAc...) asparagine glycans are attached at residues Asn1154 and Asn1155. EGF-like domains lie at Asp1183–Gln1222 and Ile1223–Arg1262. 2 N-linked (GlcNAc...) asparagine glycosylation sites follow: Asn1195 and Asn1218. 5 LDL-receptor class B repeats span residues Ser1309–Ala1355, Gly1356–Asp1398, Gly1399–Glu1445, Lys1446–Glu1490, and Val1491–Ser1531. Asn1511 carries an N-linked (GlcNAc...) (complex) asparagine glycan. An EGF-like 7 domain is found at Ala1536 to Tyr1579. 3 cysteine pairs are disulfide-bonded: Cys1540–Cys1553, Cys1549–Cys1563, and Cys1565–Cys1578. N-linked (GlcNAc...) asparagine glycosylation is found at Asn1558, Asn1575, Asn1616, and Asn1645. 4 LDL-receptor class B repeats span residues Gln1627–Ser1669, Arg1670–Arg1713, Gly1714–Glu1753, and Ser1754–Lys1798. 4 N-linked (GlcNAc...) asparagine glycosylation sites follow: Asn1723, Asn1733, Asn1763, and Asn1825. The region spanning Gly1846–Glu1887 is the EGF-like 8 domain. Disulfide bonds link Cys1850-Cys1861, Cys1857-Cys1871, and Cys1873-Cys1886. N-linked (GlcNAc...) asparagine glycosylation is present at Asn1933. LDL-receptor class B repeat units follow at residues Asp1934–Ala1976, Gly1977–Lys2019, Gly2020–Asp2063, and Gly2064–Phe2107. The N-linked (GlcNAc...) asparagine glycan is linked to Asn1995. N6-acetyllysine is present on Lys2009. Asn2048 carries N-linked (GlcNAc...) asparagine glycosylation. Residues Asn2117 and Asn2127 are each glycosylated (N-linked (GlcNAc...) asparagine). The EGF-like 9 domain occupies Gly2155–Arg2195. Intrachain disulfides connect Cys2159–Cys2170, Cys2166–Cys2180, and Cys2182–Cys2194. LDL-receptor class B repeat units follow at residues Asn2253–Trp2294, Asp2295–Gln2343, Asn2344–Ala2388, Glu2389–His2431, and Ile2432–Asp2473. N-linked (GlcNAc...) asparagine glycosylation occurs at Asn2472. The region spanning Glu2478–Arg2518 is the EGF-like 10 domain. 3 disulfides stabilise this stretch: Cys2482–Cys2493, Cys2489–Cys2503, and Cys2505–Cys2517. A glycan (N-linked (GlcNAc...) asparagine) is linked at Asn2502. Asn2521 carries an N-linked (GlcNAc...) asparagine glycan. LDL-receptor class A domains lie at Ser2522–Ser2563, Arg2564–Lys2602, Thr2603–Ala2641, Thr2642–Gly2690, Pro2694–Lys2732, Lys2732–Gly2771, and Lys2772–Tyr2814. Cystine bridges form between Cys2524–Cys2537, Cys2532–Cys2550, Cys2544–Cys2561, Cys2566–Cys2578, Cys2573–Cys2591, and Cys2585–Cys2600. Residue Asn2539 is glycosylated (N-linked (GlcNAc...) asparagine). Asn2601 is a glycosylation site (N-linked (GlcNAc...) asparagine). Disulfide bonds link Cys2605-Cys2617, Cys2612-Cys2630, Cys2624-Cys2639, Cys2644-Cys2666, Cys2660-Cys2679, Cys2673-Cys2688, Cys2696-Cys2708, Cys2703-Cys2721, Cys2715-Cys2730, Cys2734-Cys2746, Cys2741-Cys2759, Cys2753-Cys2769, Cys2774-Cys2787, Cys2781-Cys2800, and Cys2794-Cys2812. Residues Asn2620 and Asn2638 are each glycosylated (N-linked (GlcNAc...) asparagine). Asn2815 is a glycosylation site (N-linked (GlcNAc...) asparagine). LDL-receptor class A domains are found at residues Ser2816 to Tyr2855, Pro2856 to Ser2899, and His2902 to His2940. Intrachain disulfides connect Cys2818–Cys2830, Cys2825–Cys2843, Cys2837–Cys2853, Cys2858–Cys2870, Cys2865–Cys2884, Cys2878–Cys2897, Cys2904–Cys2917, Cys2912–Cys2930, Cys2924–Cys2939, Cys2944–Cys2956, Cys2952–Cys2965, Cys2967–Cys2980, Cys2986–Cys2996, Cys2992–Cys3005, and Cys3007–Cys3021. Asn2905 carries an N-linked (GlcNAc...) asparagine glycan. Residues Ile2941–Ala2981 form the EGF-like 11 domain. The EGF-like 12; calcium-binding domain maps to Asp2982–Lys3022. N-linked (GlcNAc...) asparagine glycans are attached at residues Asn3048 and Asn3089. LDL-receptor class B repeat units lie at residues Gln3069–Gly3113, Gly3114–Asn3156, Gly3157–Thr3200, Glu3201–Tyr3243, and Val3244–Leu3284. Residue Asn3264 is glycosylated (N-linked (GlcNAc...) asparagine). Residues Pro3290–Val3331 form the EGF-like 13 domain. Cystine bridges form between Cys3294-Cys3305, Cys3301-Cys3315, and Cys3317-Cys3330. 11 consecutive LDL-receptor class A domains span residues Ser3332 to Glu3371, Phe3372 to Ile3410, His3411 to Glu3450, Val3451 to Gln3491, Met3492 to Glu3533, Arg3534 to Pro3572, Arg3573 to Pro3611, Pro3611 to Thr3649, Arg3652 to Arg3692, Phe3693 to Pro3733, and Thr3739 to Ile3778. A glycan (N-linked (GlcNAc...) asparagine) is linked at Asn3333. 39 disulfide bridges follow: Cys3334/Cys3346, Cys3341/Cys3359, Cys3353/Cys3369, Cys3374/Cys3386, Cys3381/Cys3399, Cys3393/Cys3408, Cys3413/Cys3426, Cys3420/Cys3439, Cys3433/Cys3448, Cys3453/Cys3466, Cys3460/Cys3479, Cys3473/Cys3489, Cys3494/Cys3507, Cys3501/Cys3520, Cys3514/Cys3531, Cys3536/Cys3548, Cys3543/Cys3561, Cys3555/Cys3570, Cys3575/Cys3587, Cys3582/Cys3600, Cys3594/Cys3609, Cys3613/Cys3625, Cys3620/Cys3638, Cys3632/Cys3647, Cys3654/Cys3666, Cys3661/Cys3679, Cys3673/Cys3690, Cys3695/Cys3709, Cys3703/Cys3722, Cys3716/Cys3731, Cys3741/Cys3754, Cys3749/Cys3767, Cys3761/Cys3776, Cys3785/Cys3798, Cys3792/Cys3807, Cys3809/Cys3822, Cys3828/Cys3838, Cys3834/Cys3847, and Cys3849/Cys3860. N-linked (GlcNAc...) asparagine glycosylation is present at Asn3488. Asn3662 carries N-linked (GlcNAc...) asparagine glycosylation. 2 EGF-like domains span residues Lys3781–Gln3823 and Asp3824–Lys3861. Asn3788 carries N-linked (GlcNAc...) asparagine glycosylation. Asn3839 carries an N-linked (GlcNAc...) asparagine glycan. LDL-receptor class B repeat units lie at residues Gly3912–Ile3954, Gly3970–Arg4012, Gly4013–Asn4056, and Glu4057–Tyr4101. The Recognition site for proteolytical processing motif lies at Arg3940–Arg3943. Asn3953 is a glycosylation site (N-linked (GlcNAc...) asparagine). N-linked (GlcNAc...) asparagine glycosylation is found at Asn4075 and Asn4125. 7 consecutive EGF-like domains span residues Val4147 to Val4183, Arg4196 to Glu4232, Glu4232 to Thr4268, Thr4268 to Gln4304, Gln4304 to Glu4340, Glu4340 to Leu4375, and Ser4373 to Glu4409. Intrachain disulfides connect Cys4151–Cys4160, Cys4156–Cys4169, Cys4171–Cys4182, Cys4200–Cys4210, Cys4204–Cys4220, Cys4222–Cys4231, Cys4236–Cys4246, Cys4240–Cys4256, Cys4258–Cys4267, Cys4272–Cys4282, Cys4276–Cys4292, Cys4294–Cys4303, Cys4308–Cys4318, Cys4312–Cys4328, Cys4330–Cys4339, Cys4344–Cys4352, and Cys4347–Cys4363. A glycan (N-linked (GlcNAc...) asparagine) is linked at Asn4179. 2 N-linked (GlcNAc...) asparagine glycosylation sites follow: Asn4278 and Asn4279. A glycan (N-linked (GlcNAc...) asparagine) is linked at Asn4364. 4 cysteine pairs are disulfide-bonded: Cys4365–Cys4374, Cys4377–Cys4387, Cys4381–Cys4397, and Cys4399–Cys4408. Residues His4420–Tyr4444 form a helical membrane-spanning segment. Topologically, residues Lys4445–Ala4544 are cytoplasmic. An interaction with MAFB region spans residues Lys4445–Ala4544. A Phosphothreonine modification is found at Thr4460. The NPXY motif motif lies at Phe4502–Tyr4507. Tyr4507 carries the post-translational modification Phosphotyrosine. A phosphoserine mark is found at Ser4517, Ser4520, and Ser4523.

This sequence belongs to the LDLR family. In terms of assembly, heterodimer of an 85-kDa membrane-bound carboxyl subunit and a non-covalently attached 515-kDa N-terminal subunit. Intracellular domain interacts with MAFB. Found in a complex with PID1/PCLI1, LRP1 and CUBNI. Interacts with SNX17, PID1/PCLI1, PDGF and CUBN. The intracellular domain interacts with SHC1, GULP1 and DAB1. Can weakly interact (via NPXY motif) with DAB2 (via PID domain); the interaction is enhanced by tyrosine phosphorylation of the NPXY motif. Interacts with MDK; promotes neuronal survival. Interacts with LRPAP1; this interaction is followed by rapid internalization. Interacts with uPA/PLAU and PAI1/SERPINE1, either individually or in complex with each other, leading to rapid endocytosis; this interaction is abolished in the presence of LRPAP1/RAP. Also interacts with tPA/PLAT alone or in complex with SERPINE1. Interacts with the urokinase receptor PLAUR; this interaction leads to PLAUR internalization and is impaired in the presence of SORL1. Interacts with PDGFB. Interacts with TAU/MAPT, leading to endocytosis; this interaction is reduced in the presence of LRPAP1/RAP. Interacts with IGFBP3; this interaction mediates cell growth inhibition independently of IGF1. Interacts with ADGRG6. (Microbial infection) Interacts with bacterial exotoxins. As to quaternary structure, (Microbial infection) Interacts with Rift valley fever virus (RVFV) glycoprotein N; this interaction facilitates virus entry. Cleaved into a 85 kDa membrane-spanning subunit (LRP-85) and a 515 kDa large extracellular domain (LRP-515) that remains non-covalently associated. Gamma-secretase-dependent cleavage of LRP-85 releases the intracellular domain from the membrane. Post-translationally, the N-terminus is blocked. In terms of processing, phosphorylated on serine and threonine residues. Phosphorylated on tyrosine residues upon stimulation with PDGF. Tyrosine phosphorylation promotes interaction with SHC1. In terms of tissue distribution, most abundant in liver, brain and lung.

It is found in the cell membrane. The protein localises to the membrane. The protein resides in the coated pit. It localises to the cytoplasm. Its subcellular location is the nucleus. It is found in the golgi outpost. The protein localises to the cytoskeleton. The protein resides in the microtubule organizing center. In terms of biological role, endocytic receptor involved in endocytosis and in phagocytosis of apoptotic cells. Required for early embryonic development. Involved in cellular lipid homeostasis. Involved in the plasma clearance of chylomicron remnants and activated LRPAP1 (alpha 2-macroglobulin), as well as the local metabolism of complexes between plasminogen activators and their endogenous inhibitors. Acts as an LRPAP1 alpha-2-macroglobulin receptor. Acts as TAU/MAPT receptor and controls the endocytosis of TAU/MAPT as well as its subsequent spread. May modulate cellular events, such as APP metabolism, kinase-dependent intracellular signaling, neuronal calcium signaling as well as neurotransmission. Also acts as a receptor for IGFBP3 to mediate cell growth inhibition. (Microbial infection) Functions as a receptor for Pseudomonas aeruginosa exotoxin A. The polypeptide is Prolow-density lipoprotein receptor-related protein 1 (Homo sapiens (Human)).